A 227-amino-acid chain; its full sequence is uncharacterized protein (227 aa).

An N-terminal signal peptide occupies residues 1–22 (MDSVMRKSLFLLLPLVVTNAHA).

This is an uncharacterized protein from Salmonella typhi.